A 1117-amino-acid chain; its full sequence is RNA-directed RNA polymerase (1117 aa).

Polar residues predominate over residues 1–17 (MTVSGRSSWQNGKTTNA). Residues 1–23 (MTVSGRSSWQNGKTTNAMRAGKL) are disordered.

It carries out the reaction RNA(n) + a ribonucleoside 5'-triphosphate = RNA(n+1) + diphosphate. In terms of biological role, RNA-dependent RNA polymerase which replicates the viral genome. The chain is RNA-directed RNA polymerase (p1) from Penicillium chrysogenum (Penicillium notatum).